The chain runs to 473 residues: Photosystem II CP43 reaction center protein (473 aa).

Positions 1–14 (MKILYSPRRFYPVE) are excised as a propeptide. Threonine 15 is modified (N-acetylthreonine). Threonine 15 is subject to Phosphothreonine. 5 helical membrane-spanning segments follow: residues 69–93 (LFEV…PHLA), 134–155 (IIGP…KDKN), 178–200 (KALY…RKIT), 255–275 (KPFA…LSYS), and 291–312 (WFNN…ASQA). Residue glutamate 367 participates in [CaMn4O5] cluster binding. A helical membrane pass occupies residues 447-471 (RARAAAAGFEKGIDRDFEPVLSTTP).

It belongs to the PsbB/PsbC family. PsbC subfamily. In terms of assembly, PSII is composed of 1 copy each of membrane proteins PsbA, PsbB, PsbC, PsbD, PsbE, PsbF, PsbH, PsbI, PsbJ, PsbK, PsbL, PsbM, PsbT, PsbX, PsbY, PsbZ, Psb30/Ycf12, at least 3 peripheral proteins of the oxygen-evolving complex and a large number of cofactors. It forms dimeric complexes. It depends on Binds multiple chlorophylls and provides some of the ligands for the Ca-4Mn-5O cluster of the oxygen-evolving complex. It may also provide a ligand for a Cl- that is required for oxygen evolution. PSII binds additional chlorophylls, carotenoids and specific lipids. as a cofactor.

The protein localises to the plastid. It is found in the chloroplast thylakoid membrane. Its function is as follows. One of the components of the core complex of photosystem II (PSII). It binds chlorophyll and helps catalyze the primary light-induced photochemical processes of PSII. PSII is a light-driven water:plastoquinone oxidoreductase, using light energy to abstract electrons from H(2)O, generating O(2) and a proton gradient subsequently used for ATP formation. This Huperzia lucidula (Shining clubmoss) protein is Photosystem II CP43 reaction center protein.